The sequence spans 641 residues: Chaperone protein DnaK (641 aa).

Phosphothreonine; by autocatalysis is present on threonine 199. The tract at residues 603–627 (YGQQQAEGGAQAAGAAGGSSKADDA) is disordered. The span at 604 to 616 (GQQQAEGGAQAAG) shows a compositional bias: low complexity.

The protein belongs to the heat shock protein 70 family.

Functionally, acts as a chaperone. This chain is Chaperone protein DnaK, found in Azoarcus sp. (strain BH72).